Here is a 320-residue protein sequence, read N- to C-terminus: Probable serine proteinase inhibitor 1 (320 aa).

The protein belongs to the serpin family. Poxviruses subfamily.

The chain is Probable serine proteinase inhibitor 1 (SPI-1) from Swinepox virus (strain Kasza) (SWPV).